Reading from the N-terminus, the 486-residue chain is MSEVPHFVLYEHAAGYALMKIKEFDDAGLILQEVDAAHADGYKFSQIVELASFDPFKNTEAALENCNSISEGLAHPDLTNFLQKSLPKKKKHVVLGINDSKLAGSLTEAFPDLKLVFGGVITEILRGTRVHFERLAKNLPHHSLSKAQLSLGHSYSRSKVKFDVHRVDNMVIQSIALLDQLDKDINLFGMRIREWYSYHYPELFRLAPDQYKYSRLAVAILDRNKMAENENLENEILEILDNDSEKTAQIIEAARTSMGMDISDLDLENIKRFAARVSSLMEYRQQLHEYIKDRMDHCAPSLSALIGEQVGARLISHAGSLTNLAKYPASTVQILGAEKALFRALKTRSNTPKYGLLFHSSFIGKAGTKNKGRVSRYLANKCSIAARVDCFSETPVSTYGEFLRQQVEDRLEYFTSGTVPKKNIDVMKEAEEAAVEVKEKVIKKKKKAAKKAKRLAEESVTATAEAEVDEDAPKPKKKKKSKAGDE.

A Nop domain is found at cysteine 298–serine 416. The segment at lysine 450 to glutamate 486 is disordered. A compositionally biased stretch (basic residues) spans proline 475–glutamate 486.

The protein belongs to the NOP5/NOP56 family.

It localises to the nucleus. Its subcellular location is the nucleolus. Its function is as follows. Required for 60S ribosomal subunit synthesis. This is Nucleolar protein 56 from Caenorhabditis elegans.